A 288-amino-acid chain; its full sequence is Probable pectinesterase 56 (288 aa).

Residues 1-27 form the signal peptide; the sequence is MAMTSTMQLLVLSFLVIASLFLGATVA. Asn55 and Asn95 each carry an N-linked (GlcNAc...) asparagine glycan. Residues Thr120 and Gln150 each coordinate substrate. Asp173 acts as the Proton donor in catalysis. Asp194 serves as the catalytic Nucleophile. An N-linked (GlcNAc...) asparagine glycan is attached at Asn242. Residues Arg262 and Trp264 each contribute to the substrate site.

Belongs to the pectinesterase family.

The protein resides in the secreted. Its subcellular location is the cell wall. It carries out the reaction [(1-&gt;4)-alpha-D-galacturonosyl methyl ester](n) + n H2O = [(1-&gt;4)-alpha-D-galacturonosyl](n) + n methanol + n H(+). It participates in glycan metabolism; pectin degradation; 2-dehydro-3-deoxy-D-gluconate from pectin: step 1/5. Its function is as follows. Acts in the modification of cell walls via demethylesterification of cell wall pectin. The chain is Probable pectinesterase 56 (PME56) from Arabidopsis thaliana (Mouse-ear cress).